The chain runs to 629 residues: Embryonic polyadenylate-binding protein (629 aa).

RRM domains lie at 11-89 (ASLY…WSQR), 99-175 (GNVF…HFKS), 191-268 (TNVY…RAQK), and 294-370 (VNLY…LAQR). A PABC domain is found at 539–616 (QEPLTASSLA…AVAVLQAHQA (78 aa)).

This sequence belongs to the polyadenylate-binding protein type-1 family. In terms of assembly, interacts with dazl in an RNA-independent manner. The C-terminus can self-associate and also interact with the C-terminus of pabpc1, independently of RNA. RRM 1 and RRM 2 interact with both eif4g1 and paip1, and the C-terminus also interacts with paip1. Prior to oocyte maturation, found in a complex with dazl and pum2 proteins and spdy1 mRNA; pum2 dissociates from the complex during maturation. Interacts with the translation termination factor sup35/erf3.

The protein resides in the cytoplasm. In terms of biological role, binds and protects the poly(A) tail of mRNA with or without an AU-rich element (ARE) and prevents mRNA deadenylation. Stimulates the translation of mRNAs to which it is bound during early development. The sequence is that of Embryonic polyadenylate-binding protein from Xenopus tropicalis (Western clawed frog).